Consider the following 344-residue polypeptide: Serpentine receptor class alpha-27 (344 aa).

7 helical membrane-spanning segments follow: residues 28 to 48 (SIWMKINFVFVFILIFLTFYL), 67 to 87 (QILLMITLLNANLNQLIFLEI), 128 to 148 (GLLSALTFDRFFALYASTVYV), 157 to 177 (MLITVSIIVTVIVHIRTYGGV), 203 to 223 (AIFWIIMANCVLTIAVLLLNI), 252 to 272 (ICSVTSTQFVFLSFSTAALAI), and 287 to 307 (INIQYINGGVYGNLSIPVLIY).

Belongs to the nematode receptor-like protein sra family.

It localises to the membrane. This Caenorhabditis elegans protein is Serpentine receptor class alpha-27 (sra-27).